The primary structure comprises 284 residues: Nucleotide-binding protein NMC0691 (284 aa).

8 to 15 (GLSGSGKS) is an ATP binding site. 58 to 61 (DVRS) provides a ligand contact to GTP.

This sequence belongs to the RapZ-like family.

Displays ATPase and GTPase activities. The chain is Nucleotide-binding protein NMC0691 from Neisseria meningitidis serogroup C / serotype 2a (strain ATCC 700532 / DSM 15464 / FAM18).